The primary structure comprises 74 residues: Cytochrome c oxidase subunit 6C (74 aa).

The Mitochondrial matrix portion of the chain corresponds to 2–12; that stretch reads STALAKPQMRG. A helical membrane pass occupies residues 13–53; the sequence is LLARRLRFHIVGAFMVSLGFATFYKFAVAEKRKKAYADFYR. Over 54 to 74 the chain is Mitochondrial intermembrane; that stretch reads NYDSMKDFEEMRKAGIFQSAK.

It belongs to the cytochrome c oxidase subunit 6c family. As to quaternary structure, component of the cytochrome c oxidase (complex IV, CIV), a multisubunit enzyme composed of 14 subunits. The complex is composed of a catalytic core of 3 subunits MT-CO1, MT-CO2 and MT-CO3, encoded in the mitochondrial DNA, and 11 supernumerary subunits COX4I1 (or COX4I2), COX5A, COX5B, COX6A2 (or COX6A1), COX6B1 (or COX6B2), COX6C, COX7A1 (or COX7A2), COX7B, COX7C, COX8B and NDUFA4, which are encoded in the nuclear genome. The complex exists as a monomer or a dimer and forms supercomplexes (SCs) in the inner mitochondrial membrane with NADH-ubiquinone oxidoreductase (complex I, CI) and ubiquinol-cytochrome c oxidoreductase (cytochrome b-c1 complex, complex III, CIII), resulting in different assemblies (supercomplex SCI(1)III(2)IV(1) and megacomplex MCI(2)III(2)IV(2)).

It is found in the mitochondrion inner membrane. Its pathway is energy metabolism; oxidative phosphorylation. Its function is as follows. Component of the cytochrome c oxidase, the last enzyme in the mitochondrial electron transport chain which drives oxidative phosphorylation. The respiratory chain contains 3 multisubunit complexes succinate dehydrogenase (complex II, CII), ubiquinol-cytochrome c oxidoreductase (cytochrome b-c1 complex, complex III, CIII) and cytochrome c oxidase (complex IV, CIV), that cooperate to transfer electrons derived from NADH and succinate to molecular oxygen, creating an electrochemical gradient over the inner membrane that drives transmembrane transport and the ATP synthase. Cytochrome c oxidase is the component of the respiratory chain that catalyzes the reduction of oxygen to water. Electrons originating from reduced cytochrome c in the intermembrane space (IMS) are transferred via the dinuclear copper A center (CU(A)) of subunit 2 and heme A of subunit 1 to the active site in subunit 1, a binuclear center (BNC) formed by heme A3 and copper B (CU(B)). The BNC reduces molecular oxygen to 2 water molecules using 4 electrons from cytochrome c in the IMS and 4 protons from the mitochondrial matrix. The sequence is that of Cytochrome c oxidase subunit 6C (COX6C) from Bos taurus (Bovine).